We begin with the raw amino-acid sequence, 659 residues long: WD repeat-containing protein 48 homolog (659 aa).

WD repeat units lie at residues 27-66 (RHRN…SQEP), 73-112 (HHND…CMST), 115-154 (THRD…ALTA), 166-205 (GSKD…KIAK), 208-247 (GHAE…CVQT), 250-289 (VHSE…NSVL), 292-331 (EERA…KLSF), and 337-376 (KGGA…KVED). The tract at residues 592–613 (ASTGNSNSSQNNSQSDANSEGS) is disordered. Positions 596-610 (NSNSSQNNSQSDANS) are enriched in low complexity.

It belongs to the WD repeat WDR48 family. In terms of assembly, catalytic component of the Usp12-46 deubiquitylase complex consisting of Usp12-46, Wdr20 and Uaf1; regulatory subunit that, together wtih Wdr20, stabilizes Usp12-46. The Usp12-46 deubiquitylase complex associates with arr/arrow; the interaction leads to deubiquitination and stabilization of arr/arrow.

Its function is as follows. Regulatory component of the Usp12-46 deubiquitylase complex. activates deubiquitination by increasing the catalytic turnover without increasing the affinity of deubiquitinating enzymes for the substrate. The complex deubiquitylates the wg/wingless-signaling receptor arr/arrow, which stabilizes the receptor and increases its concentration at the cell surface; this enhances the sensitivity of cells to wg/wingless-signal stimulation. This increases the amplitude and spatial range of the signaling response to the wg/wingless morphogen gradient, facilitating the precise concentration-dependent regulation of its target genes. Together with Wdr20 and Usp12-46 required for wg/wingless-mediated signaling in the wing imaginal disc and for wg/wingless-dependent regulation of intestinal stem cell proliferation. This chain is WD repeat-containing protein 48 homolog, found in Aedes aegypti (Yellowfever mosquito).